The chain runs to 249 residues: Leucyl/phenylalanyl-tRNA--protein transferase (249 aa).

The tract at residues 1–21 is disordered; sequence MSRTLPHLLSSDPASPFPPAE.

This sequence belongs to the L/F-transferase family.

The protein localises to the cytoplasm. It catalyses the reaction N-terminal L-lysyl-[protein] + L-leucyl-tRNA(Leu) = N-terminal L-leucyl-L-lysyl-[protein] + tRNA(Leu) + H(+). The catalysed reaction is N-terminal L-arginyl-[protein] + L-leucyl-tRNA(Leu) = N-terminal L-leucyl-L-arginyl-[protein] + tRNA(Leu) + H(+). The enzyme catalyses L-phenylalanyl-tRNA(Phe) + an N-terminal L-alpha-aminoacyl-[protein] = an N-terminal L-phenylalanyl-L-alpha-aminoacyl-[protein] + tRNA(Phe). Functions in the N-end rule pathway of protein degradation where it conjugates Leu, Phe and, less efficiently, Met from aminoacyl-tRNAs to the N-termini of proteins containing an N-terminal arginine or lysine. This chain is Leucyl/phenylalanyl-tRNA--protein transferase, found in Xanthomonas campestris pv. campestris (strain 8004).